Consider the following 425-residue polypeptide: Type I restriction enzyme MjaVII specificity subunit (425 aa).

The segment at 9-168 is target recognition domain 1; it reads KKTEIGEIPE…KSFKIPLPPL (160 aa). A central conserved region (CCR) region spans residues 169-208; it reads EEQKQIAKILTKIDEGIEIIEKSINKLERIKKGLMHKLLT. The stretch at 169-208 forms a coiled coil; the sequence is EEQKQIAKILTKIDEGIEIIEKSINKLERIKKGLMHKLLT. Positions 209 to 368 are target recognition domain 2; that stretch reads KGIGHSRFKK…TFKELSKSML (160 aa). Positions 369–418 form a coiled coil; it reads ENFKIPLPPLEEQKQIAKILSSVDKSIELKKQKKEKLQRMKKKIMELLLT. The interval 369-418 is distal conserved region (DCR); that stretch reads ENFKIPLPPLEEQKQIAKILSSVDKSIELKKQKKEKLQRMKKKIMELLLT.

The protein belongs to the type-I restriction system S methylase family. In terms of assembly, the type I restriction/modification system is composed of three polypeptides R, M and S.

Functionally, the specificity (S) subunit of a type I restriction enzyme; this subunit dictates DNA sequence specificity. The M and S subunits together form a methyltransferase (MTase) that methylates A-3 on the top and bottom strands of the sequence 5'-CAAN(7)TGG-3'. In the presence of the R subunit the complex can also act as an endonuclease, binding to the same target sequence but cutting the DNA some distance from this site. Whether the DNA is cut or modified depends on the methylation state of the target sequence. When the target site is unmodified, the DNA is cut. When the target site is hemimethylated, the complex acts as a maintenance MTase modifying the DNA so that both strands become methylated. After locating a non-methylated recognition site, the enzyme complex serves as a molecular motor that translocates DNA in an ATP-dependent manner until a collision occurs that triggers cleavage. The polypeptide is Type I restriction enzyme MjaVII specificity subunit (Methanocaldococcus jannaschii (strain ATCC 43067 / DSM 2661 / JAL-1 / JCM 10045 / NBRC 100440) (Methanococcus jannaschii)).